A 184-amino-acid polypeptide reads, in one-letter code: Uroplakin-2 (184 aa).

An N-terminal signal peptide occupies residues 1-25 (MAPLLPIRTLPLILILLALLSPGAA). A propeptide spanning residues 26–84 (DFNISSLSGLLSPALTESLLVALPPCHLTGGNATLMVRRANDSKVVTSSFVVPPCRGRR) is cleaved from the precursor. Asn-28, Asn-57, and Asn-66 each carry an N-linked (GlcNAc...) asparagine glycan. At 85-155 (ELVSVVDSGA…IGLGMARTGG (71 aa)) the chain is on the lumenal side. The helical transmembrane segment at 156-176 (MVVITVLLSVAMFLLVLGFII) threads the bilayer. Topologically, residues 177–184 (ALALGSRK) are cytoplasmic.

Belongs to the uroplakin-2 family. As to quaternary structure, interacts with uroplakin-1a (UPK1A). Expressed in ureter.

The protein resides in the cell membrane. Functionally, component of the asymmetric unit membrane (AUM); a highly specialized biomembrane elaborated by terminally differentiated urothelial cells. May play an important role in regulating the assembly of the AUM. The chain is Uroplakin-2 (UPK2) from Homo sapiens (Human).